The chain runs to 132 residues: Small ribosomal subunit protein uS11 (132 aa).

Belongs to the universal ribosomal protein uS11 family. In terms of assembly, part of the 30S ribosomal subunit.

Functionally, located on the platform of the 30S subunit. This Sulfurisphaera tokodaii (strain DSM 16993 / JCM 10545 / NBRC 100140 / 7) (Sulfolobus tokodaii) protein is Small ribosomal subunit protein uS11.